An 884-amino-acid polypeptide reads, in one-letter code: Alanine--tRNA ligase (884 aa).

His-570, His-574, Cys-676, and His-680 together coordinate Zn(2+).

It belongs to the class-II aminoacyl-tRNA synthetase family. The cofactor is Zn(2+).

Its subcellular location is the cytoplasm. The catalysed reaction is tRNA(Ala) + L-alanine + ATP = L-alanyl-tRNA(Ala) + AMP + diphosphate. Its function is as follows. Catalyzes the attachment of alanine to tRNA(Ala) in a two-step reaction: alanine is first activated by ATP to form Ala-AMP and then transferred to the acceptor end of tRNA(Ala). Also edits incorrectly charged Ser-tRNA(Ala) and Gly-tRNA(Ala) via its editing domain. The protein is Alanine--tRNA ligase of Lawsonia intracellularis (strain PHE/MN1-00).